The sequence spans 446 residues: Glutamyl-tRNA reductase (446 aa).

Residues 49–52 (TCNR), Ser-108, 113–115 (ETQ), and Gln-119 contribute to the substrate site. The Nucleophile role is filled by Cys-50. 188–193 (GAGKMS) serves as a coordination point for NADP(+).

Belongs to the glutamyl-tRNA reductase family. Homodimer.

The catalysed reaction is (S)-4-amino-5-oxopentanoate + tRNA(Glu) + NADP(+) = L-glutamyl-tRNA(Glu) + NADPH + H(+). Its pathway is porphyrin-containing compound metabolism; protoporphyrin-IX biosynthesis; 5-aminolevulinate from L-glutamyl-tRNA(Glu): step 1/2. Its function is as follows. Catalyzes the NADPH-dependent reduction of glutamyl-tRNA(Glu) to glutamate 1-semialdehyde (GSA). In Desulforudis audaxviator (strain MP104C), this protein is Glutamyl-tRNA reductase.